Reading from the N-terminus, the 112-residue chain is Gonad-inhibiting hormone (112 aa).

The signal sequence occupies residues 1–31; the sequence is MVTRVGSGFSVQRVWLLLVIVVVLCGSVTQQ. 3 disulfides stabilise this stretch: cysteine 41–cysteine 78, cysteine 58–cysteine 74, and cysteine 61–cysteine 87. Alanine 109 is modified (alanine amide).

Produced in the eyestalk X-organ sinus gland complex of male and female lobsters.

It localises to the secreted. Functionally, inhibits vitellogenesis in female animals. Plays a prominent role in the regulation of reproduction/molting processes. This chain is Gonad-inhibiting hormone, found in Homarus americanus (American lobster).